A 640-amino-acid polypeptide reads, in one-letter code: Threonine--tRNA ligase (640 aa).

Residues 1 to 61 (MPIIALPDGN…EKDSEVNIIT (61 aa)) form the TGS domain. A catalytic region spans residues 242–533 (DHRRIAKQMS…LIEHYAGRLP (292 aa)). Positions 333, 384, and 510 each coordinate Zn(2+).

The protein belongs to the class-II aminoacyl-tRNA synthetase family. In terms of assembly, homodimer. The cofactor is Zn(2+).

It is found in the cytoplasm. The enzyme catalyses tRNA(Thr) + L-threonine + ATP = L-threonyl-tRNA(Thr) + AMP + diphosphate + H(+). Catalyzes the attachment of threonine to tRNA(Thr) in a two-step reaction: L-threonine is first activated by ATP to form Thr-AMP and then transferred to the acceptor end of tRNA(Thr). Also edits incorrectly charged L-seryl-tRNA(Thr). The chain is Threonine--tRNA ligase from Prochlorococcus marinus (strain MIT 9313).